We begin with the raw amino-acid sequence, 165 residues long: 5-formyltetrahydrofolate cyclo-ligase (165 aa).

4 to 8 (KNSLR) is a binding site for ATP. Isoleucine 51 and glutamate 56 together coordinate substrate. 116 to 124 (RIGFGKGYY) is a binding site for ATP. Residue aspartate 125 participates in Mg(2+) binding. ATP-binding residues include arginine 126 and tryptophan 154. Residue aspartate 155 coordinates Mg(2+).

This sequence belongs to the 5-formyltetrahydrofolate cyclo-ligase family. Monomer or homodimer. Mg(2+) serves as cofactor.

It localises to the cytoplasm. The catalysed reaction is (6S)-5-formyl-5,6,7,8-tetrahydrofolate + ATP = (6R)-5,10-methenyltetrahydrofolate + ADP + phosphate. In terms of biological role, involved in folate metabolism. Catalyzes the irreversible conversion of 5-formyltetrahydrofolate (5-FTHF) to yield 5,10-methenyltetrahydrofolate. The sequence is that of 5-formyltetrahydrofolate cyclo-ligase from Mycoplasma genitalium (strain ATCC 33530 / DSM 19775 / NCTC 10195 / G37) (Mycoplasmoides genitalium).